Consider the following 82-residue polypeptide: Small ribosomal subunit protein bS18 (82 aa).

This sequence belongs to the bacterial ribosomal protein bS18 family. In terms of assembly, part of the 30S ribosomal subunit. Forms a tight heterodimer with protein bS6.

In terms of biological role, binds as a heterodimer with protein bS6 to the central domain of the 16S rRNA, where it helps stabilize the platform of the 30S subunit. The chain is Small ribosomal subunit protein bS18 from Chlamydia pneumoniae (Chlamydophila pneumoniae).